The following is a 506-amino-acid chain: Squalene monooxygenase 1,1 (506 aa).

Helical transmembrane passes span 3-23 and 47-67; these read LAFPHVCLWTLLAFVLTWTVF and DADVIIVGAGVGGSALAYALA. Residues 57-58, 77-78, arginine 85, phenylalanine 90, arginine 157, valine 173, aspartate 336, and methionine 349 contribute to the FAD site; these read VG and ER. A helical membrane pass occupies residues 447–467; it reads LIFHLCGITLSSIGQLLSPFP.

The protein belongs to the squalene monooxygenase family. The cofactor is FAD.

It localises to the membrane. The enzyme catalyses squalene + reduced [NADPH--hemoprotein reductase] + O2 = (S)-2,3-epoxysqualene + oxidized [NADPH--hemoprotein reductase] + H2O + H(+). Its pathway is terpene metabolism; lanosterol biosynthesis; lanosterol from farnesyl diphosphate: step 2/3. Functionally, catalyzes the stereospecific oxidation of squalene to (S)-2,3-epoxysqualene, and is considered to be a rate-limiting enzyme in steroid biosynthesis. The sequence is that of Squalene monooxygenase 1,1 (SQP1,1) from Brassica napus (Rape).